The chain runs to 324 residues: Phospho-N-acetylmuramoyl-pentapeptide-transferase (324 aa).

Helical transmembrane passes span V5–I25, G50–M70, I77–L97, L117–A137, L147–S167, L176–W196, V203–H223, V227–L247, L250–L270, and V302–V322.

Belongs to the glycosyltransferase 4 family. MraY subfamily. Requires Mg(2+) as cofactor.

The protein resides in the cell membrane. It catalyses the reaction UDP-N-acetyl-alpha-D-muramoyl-L-alanyl-gamma-D-glutamyl-meso-2,6-diaminopimeloyl-D-alanyl-D-alanine + di-trans,octa-cis-undecaprenyl phosphate = di-trans,octa-cis-undecaprenyl diphospho-N-acetyl-alpha-D-muramoyl-L-alanyl-D-glutamyl-meso-2,6-diaminopimeloyl-D-alanyl-D-alanine + UMP. It functions in the pathway cell wall biogenesis; peptidoglycan biosynthesis. Functionally, catalyzes the initial step of the lipid cycle reactions in the biosynthesis of the cell wall peptidoglycan: transfers peptidoglycan precursor phospho-MurNAc-pentapeptide from UDP-MurNAc-pentapeptide onto the lipid carrier undecaprenyl phosphate, yielding undecaprenyl-pyrophosphoryl-MurNAc-pentapeptide, known as lipid I. This Bacillus subtilis (strain 168) protein is Phospho-N-acetylmuramoyl-pentapeptide-transferase.